We begin with the raw amino-acid sequence, 489 residues long: Tripartite motif-containing protein 10 (489 aa).

An RING-type zinc finger spans residues 16 to 61 (CPVCQGTLREPVTIDCGHNFCRVCLTRYLEITSPDPEEPPTCPLCK). The B box-type zinc-finger motif lies at 94-135 (DEEDVCPEHGEKVYFFCEDDEMQLCVVCREAWEHRAHTVRFL). Positions 99, 102, 121, and 127 each coordinate Zn(2+). Residues 142 to 245 (YREQIQKCLE…IEELEEKKER (104 aa)) adopt a coiled-coil conformation. In terms of domain architecture, B30.2/SPRY spans 292-486 (REMKMFLEKL…FSLSSQEGAA (195 aa)).

The protein belongs to the TRIM/RBCC family. As to quaternary structure, interacts with IFNAR1; this interaction prevents association of IFNAR1 with TYK2.

The protein resides in the cytoplasm. In terms of biological role, E3 ligase that plays an essential role in the differentiation and survival of terminal erythroid cells. May directly bind to PTEN and promote its ubiquitination, resulting in its proteasomal degradation and activation of hypertrophic signaling. In addition, plays a role in immune response regulation by repressing the phosphorylation of STAT1 and STAT2 in the interferon/JAK/STAT signaling pathway independent of its E3 ligase activity. Mechanistically, interacts with the intracellular domain of IFNAR1 and thereby inhibits the association between TYK2 and IFNAR1. The protein is Tripartite motif-containing protein 10 (TRIM10) of Bos taurus (Bovine).